Here is a 261-residue protein sequence, read N- to C-terminus: Carbonic anhydrase 1 (261 aa).

The disordered stretch occupies residues 1-31 (MASPDWGYDDKNGPEQWSKLYPIANGNNQSP). A2 carries the N-acetylalanine modification. An Alpha-carbonic anhydrase domain is found at 4 to 261 (PDWGYDDKNG…LKGRTVRASF (258 aa)). H65 acts as the Proton donor/acceptor in catalysis. Zn(2+) contacts are provided by H95, H97, and H120. Substrate contacts are provided by residues T200 and 200 to 201 (TH). Positions 240–261 (VPMQHNNRPTQPLKGRTVRASF) are disordered.

The protein belongs to the alpha-carbonic anhydrase family. It depends on Zn(2+) as a cofactor.

It localises to the cytoplasm. The enzyme catalyses hydrogencarbonate + H(+) = CO2 + H2O. The catalysed reaction is urea = cyanamide + H2O. Inhibited by acetazolamide. Its function is as follows. Catalyzes the reversible hydration of carbon dioxide. Can hydrate cyanamide to urea. This Gorilla gorilla gorilla (Western lowland gorilla) protein is Carbonic anhydrase 1 (CA1).